We begin with the raw amino-acid sequence, 256 residues long: Signal peptidase I (256 aa).

Active-site residues include S32 and K75.

It belongs to the peptidase S26 family.

It carries out the reaction Cleavage of hydrophobic, N-terminal signal or leader sequences from secreted and periplasmic proteins.. The protein is Signal peptidase I (lepB) of Aquifex aeolicus (strain VF5).